The sequence spans 306 residues: Light-independent protochlorophyllide reductase iron-sulfur ATP-binding protein (306 aa).

Residues 1-31 are disordered; the sequence is MREAAGLEARGLKSPPILKGQDGEGSLQVHQ. ATP-binding positions include 50–55 and Lys79; that span reads GIGKST. A Mg(2+)-binding site is contributed by Ser54. Residues Cys135 and Cys169 each coordinate [4Fe-4S] cluster. 220-221 is an ATP binding site; that stretch reads NR.

Belongs to the NifH/BchL/ChlL family. Homodimer. Protochlorophyllide reductase is composed of three subunits; BchL, BchN and BchB. Requires [4Fe-4S] cluster as cofactor.

It catalyses the reaction chlorophyllide a + oxidized 2[4Fe-4S]-[ferredoxin] + 2 ADP + 2 phosphate = protochlorophyllide a + reduced 2[4Fe-4S]-[ferredoxin] + 2 ATP + 2 H2O. The protein operates within porphyrin-containing compound metabolism; bacteriochlorophyll biosynthesis (light-independent). Component of the dark-operative protochlorophyllide reductase (DPOR) that uses Mg-ATP and reduced ferredoxin to reduce ring D of protochlorophyllide (Pchlide) to form chlorophyllide a (Chlide). This reaction is light-independent. The L component serves as a unique electron donor to the NB-component of the complex, and binds Mg-ATP. The chain is Light-independent protochlorophyllide reductase iron-sulfur ATP-binding protein from Jannaschia sp. (strain CCS1).